The chain runs to 120 residues: Aspartate 1-decarboxylase (120 aa).

The active-site Schiff-base intermediate with substrate; via pyruvic acid is the serine 25. Pyruvic acid (Ser) is present on serine 25. Residue threonine 57 participates in substrate binding. Tyrosine 58 (proton donor) is an active-site residue. 73 to 75 provides a ligand contact to substrate; the sequence is GAA.

The protein belongs to the PanD family. As to quaternary structure, heterooctamer of four alpha and four beta subunits. Pyruvate is required as a cofactor. In terms of processing, is synthesized initially as an inactive proenzyme, which is activated by self-cleavage at a specific serine bond to produce a beta-subunit with a hydroxyl group at its C-terminus and an alpha-subunit with a pyruvoyl group at its N-terminus.

The protein localises to the cytoplasm. It catalyses the reaction L-aspartate + H(+) = beta-alanine + CO2. Its pathway is cofactor biosynthesis; (R)-pantothenate biosynthesis; beta-alanine from L-aspartate: step 1/1. Its function is as follows. Catalyzes the pyruvoyl-dependent decarboxylation of aspartate to produce beta-alanine. The protein is Aspartate 1-decarboxylase of Deinococcus geothermalis (strain DSM 11300 / CIP 105573 / AG-3a).